Reading from the N-terminus, the 153-residue chain is Transthyretin (153 aa).

Positions 1-24 (MAYYNTLALLTIFIFSGAFHRAQG) are cleaved as a signal peptide. Cys-33 carries the post-translational modification Sulfocysteine. The L-thyroxine site is built by Lys-38, Glu-77, and Ser-140.

It belongs to the transthyretin family. Homotetramer. Dimer of dimers. In the homotetramer, subunits assemble around a central channel that can accommodate two ligand molecules. Interacts with RBP4. In terms of processing, sulfonation of the reactive cysteine Cys-33 enhances the stability of the native conformation of TTR, avoiding misassembly of the protein leading to amyloid formation. In terms of tissue distribution, detected in plasma (at protein level). Expressed during metamorphosis in tadpole liver but not in tadpole brain, nor adult liver.

It localises to the secreted. Functionally, thyroid hormone-binding protein, with a much higher binding affinity for triiodothyronine (T3) than for thyroxine (T4). Probably transports triiodothyronine from the bloodstream to the brain. This Aquarana catesbeiana (American bullfrog) protein is Transthyretin.